A 412-amino-acid chain; its full sequence is MNILSAIIVFENLHEVKRLFHWGPIIALTVIGVCSSMAILDSIIWYWPLDTTGGSINFIMLINWTVLILYNYFNAMFVGPGYIPLEWKPEKQQDIMYLQFCRLCQGYKAPRSHHCRKCNRCVMKMDHHCPWINNCCGHLNHAYFTSFLLLAPLGCIHAALIFIMTMYTQLYDRISFGWSSVKIDMSAARHIHHPIMPFSIAAFAATLFALGLALGTTIAVGMLFFIQMKVILRNRTSIEAWIEEKAKDRIQYYQTGEDFIFPYDLGSRWENFKQVFTWSGAPMGDGIEWPVHEKCDQYTLTIEQLKQKHDKRQRSVEYRVVEEYNGACCPLGKGLNTFFRTPCTEEPRIKLTKGETIFATRGTKWWMYGDKVLNEEQAKAGVRIRGWFPRRCVEKCLYDSANNSTSEEKKEQ.

Residues 1-24 (MNILSAIIVFENLHEVKRLFHWGP) lie on the Cytoplasmic side of the membrane. The helical transmembrane segment at 25-45 (IIALTVIGVCSSMAILDSIIW) threads the bilayer. At 46-57 (YWPLDTTGGSIN) the chain is on the lumenal side. Residues 58-78 (FIMLINWTVLILYNYFNAMFV) traverse the membrane as a helical segment. The Cytoplasmic segment spans residues 79-143 (GPGYIPLEWK…NCCGHLNHAY (65 aa)). Residues 99 to 149 (QFCRLCQGYKAPRSHHCRKCNRCVMKMDHHCPWINNCCGHLNHAYFTSFLL) form the DHHC domain. Cys-129 functions as the S-palmitoyl cysteine intermediate in the catalytic mechanism. A helical membrane pass occupies residues 144-164 (FTSFLLLAPLGCIHAALIFIM). Residues 165-205 (TMYTQLYDRISFGWSSVKIDMSAARHIHHPIMPFSIAAFAA) lie on the Lumenal side of the membrane. Residues 206 to 226 (TLFALGLALGTTIAVGMLFFI) traverse the membrane as a helical segment. The Cytoplasmic segment spans residues 227-412 (QMKVILRNRT…NSTSEEKKEQ (186 aa)). Residues 313–398 (QRSVEYRVVE…PRRCVEKCLY (86 aa)) form the SH3 domain. S-palmitoyl cysteine attachment occurs at residues Cys-328, Cys-329, and Cys-343. The short motif at 409–412 (KKEQ) is the Di-lysine motif element.

Belongs to the DHHC palmitoyltransferase family.

The protein resides in the endoplasmic reticulum membrane. It catalyses the reaction L-cysteinyl-[protein] + hexadecanoyl-CoA = S-hexadecanoyl-L-cysteinyl-[protein] + CoA. It carries out the reaction L-cysteinyl-[protein] + octadecanoyl-CoA = S-octadecanoyl-L-cysteinyl-[protein] + CoA. Its function is as follows. Endoplasmic reticulum palmitoyl acyltransferase that probably catalyzes the addition of palmitate onto various protein substrates and is involved in a variety of cellular processes. Could also function as a stearoyltransferase. The chain is Palmitoyltransferase ZDHHC6 from Danio rerio (Zebrafish).